The primary structure comprises 376 residues: MLITSNAKTQLEDTLAKMAEAAELDKTRWSRLNTAYEAISKWLSDDPEFFGGVEIEIYPQGSVSIGTTTKPYGKTEFDLDVVIHIKLLSSNYDPKTIFNEVVRRLNENETYRKICEPKSRCVRLNYQGDFHLDVVPGCMVIIYNHELIDITDQKNEIWLRSSPKGYQKWFLDIANRVELTLLEMTFSAHKVEIEEYAKKKPLQRAVQLIKMRRNIYFDQNPENAPTSIILTTLAAQFYEGQSSISETFEGIISKLKNHIETLFPNRPFELPNPVNPSENLADIWVDKPELYKHFISFINNLHNEWQDLKKAHGIEEEAILMKGMFGNDPYIKAMEARAETVNQKRGNGLGILATGVMVDRAVEKSLPVMPNTFYGD.

Belongs to the CD-NTase family. G05 subfamily.

It catalyses the reaction 2 GTP = 3',3'-c-di-GMP + 2 diphosphate. Its function is as follows. Cyclic nucleotide synthase (second messenger synthase) of a CBASS antivirus system. CBASS (cyclic oligonucleotide-based antiphage signaling system) provides immunity against bacteriophage. The CD-NTase protein synthesizes cyclic nucleotides in response to infection; these serve as specific second messenger signals. The signals activate a diverse range of effectors, leading to bacterial cell death and thus abortive phage infection. A type I-D CBASS(GG) system. Functionally, cyclic dinucleotide synthase that catalyzes the synthesis of c-di-GMP, has no activity with other NTP substrates. The chain is c-di-GMP synthase from Roseivirga ehrenbergii (strain DSM 102268 / JCM 13514 / KCTC 12282 / NCIMB 14502 / KMM 6017).